The sequence spans 123 residues: Large ribosomal subunit protein bL12 (123 aa).

The protein belongs to the bacterial ribosomal protein bL12 family. In terms of assembly, homodimer. Part of the ribosomal stalk of the 50S ribosomal subunit. Forms a multimeric L10(L12)X complex, where L10 forms an elongated spine to which 2 to 4 L12 dimers bind in a sequential fashion. Binds GTP-bound translation factors.

Its function is as follows. Forms part of the ribosomal stalk which helps the ribosome interact with GTP-bound translation factors. Is thus essential for accurate translation. The chain is Large ribosomal subunit protein bL12 from Rhodopseudomonas palustris (strain BisB5).